Reading from the N-terminus, the 201-residue chain is Recombination protein RecR (201 aa).

The segment at 60 to 75 adopts a C4-type zinc-finger fold; that stretch reads CSVCGNVDTIDPCSIC. One can recognise a Toprim domain in the interval 83–178; the sequence is ATIIVVEDIA…KVTRLAHGVP (96 aa).

It belongs to the RecR family.

Its function is as follows. May play a role in DNA repair. It seems to be involved in an RecBC-independent recombinational process of DNA repair. It may act with RecF and RecO. This is Recombination protein RecR from Bartonella henselae (strain ATCC 49882 / DSM 28221 / CCUG 30454 / Houston 1) (Rochalimaea henselae).